The sequence spans 123 residues: Basic phospholipase A2 Ph-TX1 (123 aa).

Residues tyrosine 27, glycine 29, and glycine 31 each coordinate Ca(2+). Intrachain disulfides connect cysteine 28–cysteine 45, cysteine 44–cysteine 96, cysteine 50–cysteine 123, cysteine 51–cysteine 89, cysteine 59–cysteine 83, and cysteine 77–cysteine 87. Histidine 48 is an active-site residue. Aspartate 49 provides a ligand contact to Ca(2+). Aspartate 90 is an active-site residue.

The protein belongs to the phospholipase A2 family. Group II subfamily. D49 sub-subfamily. In terms of assembly, monomer. Ca(2+) is required as a cofactor. Expressed by the venom gland.

Its subcellular location is the secreted. It catalyses the reaction a 1,2-diacyl-sn-glycero-3-phosphocholine + H2O = a 1-acyl-sn-glycero-3-phosphocholine + a fatty acid + H(+). With respect to regulation, inhibited by divalent cations different from calcium ions (cadmium, magnesium, manganese, zinc), since they act as competitive antagonists of this cofactor. In terms of biological role, snake venom phospholipase A2 (PLA2) that induces in vivo myotoxicity, moderates footpad edema, and causes in vitro neuromuscular blockade. PLA2 catalyzes the calcium-dependent hydrolysis of the 2-acyl groups in 3-sn-phosphoglycerides. The protein is Basic phospholipase A2 Ph-TX1 of Bothrocophias hyoprora (Amazonian hognose viper).